A 229-amino-acid chain; its full sequence is Synaptogyrin-3 (229 aa).

An N-acetylmethionine modification is found at methionine 1. In terms of domain architecture, MARVEL spans 20-172 (FARRPQTLLR…LTVKALQRFR (153 aa)). 4 helical membrane passes run 30 to 50 (VASWVFSIAVFGPIVNEGYVN), 70 to 90 (FGVALGLGAFLACAAFLLLDV), 105 to 125 (VLLDLGFSGLWSFLWFVGFCF), and 148 to 168 (AAIAFSFFSILSWVALTVKAL). Residues 209–219 (QSPPFTETLDT) show a composition bias toward polar residues. The tract at residues 209–229 (QSPPFTETLDTSPKGYQVPAY) is disordered.

It belongs to the synaptogyrin family. Interacts (via N-terminus) with SLC6A3 (via N-terminus). May interact with VMAT2. In terms of tissue distribution, expressed in brain and placenta.

The protein localises to the cytoplasmic vesicle. Its subcellular location is the secretory vesicle. It localises to the synaptic vesicle membrane. The protein resides in the synapse. In terms of biological role, may play a role in regulated exocytosis. May indirectly regulate the activity of the plasma membrane dopamine transporter SLC6A3 and thereby regulate dopamine transport back from the synaptic cleft into the presynaptic terminal. The sequence is that of Synaptogyrin-3 from Homo sapiens (Human).